The primary structure comprises 153 residues: NAD(P)H-quinone oxidoreductase subunit N (153 aa).

The protein belongs to the complex I NdhN subunit family. NDH-1 can be composed of about 15 different subunits; different subcomplexes with different compositions have been identified which probably have different functions.

Its subcellular location is the cellular thylakoid membrane. It carries out the reaction a plastoquinone + NADH + (n+1) H(+)(in) = a plastoquinol + NAD(+) + n H(+)(out). The enzyme catalyses a plastoquinone + NADPH + (n+1) H(+)(in) = a plastoquinol + NADP(+) + n H(+)(out). Functionally, NDH-1 shuttles electrons from an unknown electron donor, via FMN and iron-sulfur (Fe-S) centers, to quinones in the respiratory and/or the photosynthetic chain. The immediate electron acceptor for the enzyme in this species is believed to be plastoquinone. Couples the redox reaction to proton translocation, and thus conserves the redox energy in a proton gradient. Cyanobacterial NDH-1 also plays a role in inorganic carbon-concentration. This is NAD(P)H-quinone oxidoreductase subunit N from Prochlorococcus marinus (strain MIT 9303).